A 240-amino-acid polypeptide reads, in one-letter code: Methylthioribulose-1-phosphate dehydratase (240 aa).

Over residues Met1–Ser17 the composition is skewed to polar residues. Residues Met1–Glu20 are disordered. Residue Cys100 participates in substrate binding. His117 and His119 together coordinate Zn(2+). Catalysis depends on Glu146, which acts as the Proton donor/acceptor. Residue His202 coordinates Zn(2+).

It belongs to the aldolase class II family. MtnB subfamily. It depends on Zn(2+) as a cofactor.

The protein resides in the cytoplasm. The catalysed reaction is 5-(methylsulfanyl)-D-ribulose 1-phosphate = 5-methylsulfanyl-2,3-dioxopentyl phosphate + H2O. The protein operates within amino-acid biosynthesis; L-methionine biosynthesis via salvage pathway; L-methionine from S-methyl-5-thio-alpha-D-ribose 1-phosphate: step 2/6. Functionally, catalyzes the dehydration of methylthioribulose-1-phosphate (MTRu-1-P) into 2,3-diketo-5-methylthiopentyl-1-phosphate (DK-MTP-1-P). This chain is Methylthioribulose-1-phosphate dehydratase, found in Neosartorya fischeri (strain ATCC 1020 / DSM 3700 / CBS 544.65 / FGSC A1164 / JCM 1740 / NRRL 181 / WB 181) (Aspergillus fischerianus).